The following is a 167-amino-acid chain: Lipoprotein signal peptidase (167 aa).

3 consecutive transmembrane segments (helical) span residues 10 to 30 (LIWLLLSIAIIALDQATKAWV), 68 to 88 (WQMWLFIALALGISGLLTFWL), and 98 to 118 (SALPYALIIGGGIGNVIDRFL). Residues Asp-124 and Asp-142 contribute to the active site. The helical transmembrane segment at 138 to 158 (FNLADSAIVAGAIGIGLLSLF) threads the bilayer.

The protein belongs to the peptidase A8 family.

It is found in the cell inner membrane. It catalyses the reaction Release of signal peptides from bacterial membrane prolipoproteins. Hydrolyzes -Xaa-Yaa-Zaa-|-(S,diacylglyceryl)Cys-, in which Xaa is hydrophobic (preferably Leu), and Yaa (Ala or Ser) and Zaa (Gly or Ala) have small, neutral side chains.. The protein operates within protein modification; lipoprotein biosynthesis (signal peptide cleavage). Functionally, this protein specifically catalyzes the removal of signal peptides from prolipoproteins. This Xylella fastidiosa (strain M23) protein is Lipoprotein signal peptidase.